Here is a 255-residue protein sequence, read N- to C-terminus: uncharacterized protein (255 aa).

An N-terminal signal peptide occupies residues 1–23; it reads MKRLNKLVLYISFLILVISFTAG. Cys-24 carries the N-palmitoyl cysteine lipid modification. A lipid anchor (S-diacylglycerol cysteine) is attached at Cys-24.

It belongs to the staphylococcal tandem lipoprotein family.

Its subcellular location is the cell membrane. This is an uncharacterized protein from Staphylococcus aureus (strain N315).